The following is a 471-amino-acid chain: Glutamate--tRNA ligase 1 (471 aa).

A 'HIGH' region motif is present at residues 15-25 (PSPTGYLHIGG). A 'KMSKS' region motif is present at residues 243-247 (KLSKR). An ATP-binding site is contributed by K246.

Belongs to the class-I aminoacyl-tRNA synthetase family. Glutamate--tRNA ligase type 1 subfamily. In terms of assembly, monomer.

The protein localises to the cytoplasm. The enzyme catalyses tRNA(Glu) + L-glutamate + ATP = L-glutamyl-tRNA(Glu) + AMP + diphosphate. In terms of biological role, catalyzes the attachment of glutamate to tRNA(Glu) in a two-step reaction: glutamate is first activated by ATP to form Glu-AMP and then transferred to the acceptor end of tRNA(Glu). This Cereibacter sphaeroides (strain ATCC 17023 / DSM 158 / JCM 6121 / CCUG 31486 / LMG 2827 / NBRC 12203 / NCIMB 8253 / ATH 2.4.1.) (Rhodobacter sphaeroides) protein is Glutamate--tRNA ligase 1.